The chain runs to 32 residues: Delta-conotoxin-like CnVIB (32 aa).

3 disulfide bridges follow: Cys3/Cys18, Cys10/Cys22, and Cys17/Cys27. 4-hydroxyproline is present on residues Pro6 and Pro14.

This sequence belongs to the conotoxin O1 superfamily. Expressed by the venom duct.

Its subcellular location is the secreted. Functionally, delta-conotoxins bind to site 6 of voltage-gated sodium channels (Nav) and inhibit the inactivation process. This toxin acts on Nav1.4/SCN4A and Nav1.6/SCN8A (EC(50)=2.3 uM). This Conus consors (Singed cone) protein is Delta-conotoxin-like CnVIB.